We begin with the raw amino-acid sequence, 374 residues long: Methionine import ATP-binding protein MetN 2 (374 aa).

A disordered region spans residues 1-22; that stretch reads MSVATLQRKLPEAAPRRAGQTE. One can recognise an ABC transporter domain in the interval 32–271; that stretch reads VRFIGLGKTY…PQHEVSKTLL (240 aa). 68 to 75 contacts ATP; it reads GRSGAGKS.

The protein belongs to the ABC transporter superfamily. Methionine importer (TC 3.A.1.24) family. The complex is composed of two ATP-binding proteins (MetN), two transmembrane proteins (MetI) and a solute-binding protein (MetQ).

It localises to the cell inner membrane. It catalyses the reaction L-methionine(out) + ATP + H2O = L-methionine(in) + ADP + phosphate + H(+). It carries out the reaction D-methionine(out) + ATP + H2O = D-methionine(in) + ADP + phosphate + H(+). Part of the ABC transporter complex MetNIQ involved in methionine import. Responsible for energy coupling to the transport system. This Pseudomonas fluorescens (strain ATCC BAA-477 / NRRL B-23932 / Pf-5) protein is Methionine import ATP-binding protein MetN 2.